The sequence spans 465 residues: Cysteine--tRNA ligase (465 aa).

Zn(2+) is bound at residue Cys27. Residues 29 to 39 (PTVYNFFHIGN) carry the 'HIGH' region motif. Zn(2+)-binding residues include Cys207, His232, and Glu236. The 'KMSKS' region signature appears at 264-268 (KMSKS). Lys267 serves as a coordination point for ATP.

It belongs to the class-I aminoacyl-tRNA synthetase family. In terms of assembly, monomer. It depends on Zn(2+) as a cofactor.

Its subcellular location is the cytoplasm. The enzyme catalyses tRNA(Cys) + L-cysteine + ATP = L-cysteinyl-tRNA(Cys) + AMP + diphosphate. The chain is Cysteine--tRNA ligase from Clostridium botulinum (strain Langeland / NCTC 10281 / Type F).